Consider the following 245-residue polypeptide: Ribonuclease 3 (245 aa).

Residues 24–146 (YTVFSQKLGY…IIGAIYLESG (123 aa)) enclose the RNase III domain. Glutamate 59 contributes to the Mg(2+) binding site. Residue aspartate 63 is part of the active site. Asparagine 132 and glutamate 135 together coordinate Mg(2+). Glutamate 135 is an active-site residue. The 71-residue stretch at 173–243 (DPKTLLQEYL…ARRAYKLAVV (71 aa)) folds into the DRBM domain.

The protein belongs to the ribonuclease III family. As to quaternary structure, homodimer. Mg(2+) is required as a cofactor.

The protein localises to the cytoplasm. It catalyses the reaction Endonucleolytic cleavage to 5'-phosphomonoester.. Its function is as follows. Digests double-stranded RNA. Involved in the processing of primary rRNA transcript to yield the immediate precursors to the large and small rRNAs (23S and 16S). Processes some mRNAs, and tRNAs when they are encoded in the rRNA operon. Processes pre-crRNA and tracrRNA of type II CRISPR loci if present in the organism. This is Ribonuclease 3 from Nitrosomonas eutropha (strain DSM 101675 / C91 / Nm57).